The following is a 91-amino-acid chain: Co-chaperonin GroES (91 aa).

Belongs to the GroES chaperonin family. In terms of assembly, heptamer of 7 subunits arranged in a ring. Interacts with the chaperonin GroEL.

The protein resides in the cytoplasm. In terms of biological role, together with the chaperonin GroEL, plays an essential role in assisting protein folding. The GroEL-GroES system forms a nano-cage that allows encapsulation of the non-native substrate proteins and provides a physical environment optimized to promote and accelerate protein folding. GroES binds to the apical surface of the GroEL ring, thereby capping the opening of the GroEL channel. The polypeptide is Co-chaperonin GroES (Oenococcus oeni (strain ATCC BAA-331 / PSU-1)).